The primary structure comprises 151 residues: Phosphoribosyl-AMP cyclohydrolase (151 aa).

D94 lines the Mg(2+) pocket. C95 provides a ligand contact to Zn(2+). 2 residues coordinate Mg(2+): D96 and D98. 2 residues coordinate Zn(2+): C112 and C119.

This sequence belongs to the PRA-CH family. Homodimer. Mg(2+) is required as a cofactor. It depends on Zn(2+) as a cofactor.

The protein resides in the cytoplasm. The enzyme catalyses 1-(5-phospho-beta-D-ribosyl)-5'-AMP + H2O = 1-(5-phospho-beta-D-ribosyl)-5-[(5-phospho-beta-D-ribosylamino)methylideneamino]imidazole-4-carboxamide. It functions in the pathway amino-acid biosynthesis; L-histidine biosynthesis; L-histidine from 5-phospho-alpha-D-ribose 1-diphosphate: step 3/9. In terms of biological role, catalyzes the hydrolysis of the adenine ring of phosphoribosyl-AMP. This Rhodopseudomonas palustris (strain ATCC BAA-98 / CGA009) protein is Phosphoribosyl-AMP cyclohydrolase.